A 339-amino-acid polypeptide reads, in one-letter code: MSYSFQGLLNRVNESAIVNTLKEYTGLNTPKWTFNDIPDLTGKVALVTGSSGGIGYVTALELARKGAKVYLAGRNEEKYQKVMKQIHDEVRHSKIRFLRLDLLDFESVYQAAESFIAKEEKLHILVNNAGIMNPPFELTKDGYELQIQTNYLSHYLFTELLLPTLRRTAEECRPGDVRIVHVASIAYLQAPYSGIYFPDLNLPHVLLGTFARYGQSKYAQILYSIALAKRLEKYGIYSVSLHPGVIRTELTRYSPTFALKLLEKSVFQYLLLDPIRGAMTSLYAATSPEISKEHLNGAYFTAIAQRGILHRAHDDAFVEELYRYTHKIFEDLKYLAPSP.

NADP(+) is bound by residues Ile54, Lys78, Asp101, Asn128, Tyr213, and Lys217. The active-site Proton donor is Tyr213. The active-site Lowers pKa of active site Tyr is the Lys217.

The protein belongs to the short-chain dehydrogenases/reductases (SDR) family.

This is an uncharacterized protein from Schizosaccharomyces pombe (strain 972 / ATCC 24843) (Fission yeast).